Consider the following 151-residue polypeptide: Large ribosomal subunit protein uL15 (151 aa).

The segment covering methionine 1–arginine 14 has biased composition (basic residues). The disordered stretch occupies residues methionine 1 to arginine 33.

This sequence belongs to the universal ribosomal protein uL15 family. Part of the 50S ribosomal subunit.

In terms of biological role, binds to the 23S rRNA. The sequence is that of Large ribosomal subunit protein uL15 from Thermofilum pendens (strain DSM 2475 / Hrk 5).